A 289-amino-acid polypeptide reads, in one-letter code: Iodotyrosine deiodinase 1 (289 aa).

A helical membrane pass occupies residues 1–21 (MYFLTPILVAILCILVVWIFK). Basic and acidic residues predominate over residues 47–58 (DLKDSSDLHQAE). The segment at 47–69 (DLKDSSDLHQAEEDADEWQESEE) is disordered. Over residues 59-69 (EDADEWQESEE) the composition is skewed to acidic residues. Residues 100–104 (RRSVR), serine 128, and 128–129 (SG) contribute to the FMN site. Alanine 130, glutamate 157, tyrosine 161, and lysine 182 together coordinate 3,5-diiodo-L-tyrosine. 3-iodo-L-tyrosine contacts are provided by alanine 130, glutamate 157, tyrosine 161, and lysine 182. FMN contacts are provided by residues 237–239 (TTT) and arginine 279.

It belongs to the nitroreductase family. Homodimer. Requires FMN as cofactor.

The protein localises to the cell membrane. Its subcellular location is the cytoplasmic vesicle membrane. It carries out the reaction 2 iodide + L-tyrosine + 2 NADP(+) = 3,5-diiodo-L-tyrosine + 2 NADPH + H(+). It catalyses the reaction iodide + L-tyrosine + NADP(+) = 3-iodo-L-tyrosine + NADPH. The enzyme catalyses 3-iodo-L-tyrosine + iodide + NADP(+) = 3,5-diiodo-L-tyrosine + NADPH + H(+). The catalysed reaction is L-tyrosine + chloride + NADP(+) = 3-chloro-L-tyrosine + NADPH. It carries out the reaction bromide + L-tyrosine + NADP(+) = 3-bromo-L-tyrosine + NADPH. In terms of biological role, catalyzes the dehalogenation of halotyrosines such as 3-bromo-L-tyrosine, 3-chloro-L-tyrosine, 3-iodo-L-tyrosine and 3,5-diiodo-L-tyrosine. During thyroid hormone biosynthesis, facilitates iodide salvage by catalysing the oxidative NADPH-dependent deiodination of the halogenated by-products of thyroid hormone production, monoiodotyrosine (L-MIT) and diiodotyrosine (L-DIT). The scavanged iodide can then reenter the hormone-producing pathways. Acts more efficiently on 3-iodo-L-tyrosine than 3,5-diiodo-L-tyrosine. The protein is Iodotyrosine deiodinase 1 (IYD) of Pongo abelii (Sumatran orangutan).